The sequence spans 273 residues: Undecaprenyl-diphosphatase (273 aa).

The next 7 membrane-spanning stretches (helical) occupy residues 6–26 (SLLI…LPVS), 45–65 (AKTF…VMFW), 90–110 (LTLI…LLFH), 116–136 (LFNP…LIAA), 190–210 (YAAS…ATAL), 222–242 (GDIP…LIAI), and 252–272 (ISFI…YVVF).

This sequence belongs to the UppP family.

It localises to the cell inner membrane. The catalysed reaction is di-trans,octa-cis-undecaprenyl diphosphate + H2O = di-trans,octa-cis-undecaprenyl phosphate + phosphate + H(+). Its function is as follows. Catalyzes the dephosphorylation of undecaprenyl diphosphate (UPP). Confers resistance to bacitracin. The protein is Undecaprenyl-diphosphatase of Escherichia coli O127:H6 (strain E2348/69 / EPEC).